A 140-amino-acid polypeptide reads, in one-letter code: ATP synthase epsilon chain (140 aa).

Belongs to the ATPase epsilon chain family. In terms of assembly, F-type ATPases have 2 components, CF(1) - the catalytic core - and CF(0) - the membrane proton channel. CF(1) has five subunits: alpha(3), beta(3), gamma(1), delta(1), epsilon(1). CF(0) has three main subunits: a, b and c.

It is found in the cell membrane. Its function is as follows. Produces ATP from ADP in the presence of a proton gradient across the membrane. This is ATP synthase epsilon chain from Baumannia cicadellinicola subsp. Homalodisca coagulata.